The chain runs to 116 residues: Putative iron-sulfur cluster insertion protein ErpA (116 aa).

Residues cysteine 44, cysteine 108, and cysteine 110 each contribute to the iron-sulfur cluster site.

This sequence belongs to the HesB/IscA family. Homodimer. It depends on iron-sulfur cluster as a cofactor.

In terms of biological role, required for insertion of 4Fe-4S clusters. The sequence is that of Putative iron-sulfur cluster insertion protein ErpA from Thiobacillus denitrificans (strain ATCC 25259 / T1).